Reading from the N-terminus, the 112-residue chain is Mitochondrial import inner membrane translocase subunit TIM14-2 (112 aa).

A helical membrane pass occupies residues 7-25; that stretch reads AGAAVAAAAYAGKYGIEAW. One can recognise a J domain in the interval 53–112; sequence EAALILGVRESVAAEKVKEAHRRVMVANHPDAGGSHYLASKINEAKDMMLGKTKNSGSAF.

This sequence belongs to the TIM14 family. Probable component of the PAM complex at least composed of a mitochondrial HSP70 protein, TIMM44 and TIMM14. The complex interacts with the TIMM23 component of the TIM17:23 complex.

Its subcellular location is the mitochondrion. The protein resides in the mitochondrion inner membrane. Functionally, component of the PAM complex, a complex required for the translocation of transit peptide-containing proteins from the inner membrane into the mitochondrial matrix in an ATP-dependent manner. This Arabidopsis thaliana (Mouse-ear cress) protein is Mitochondrial import inner membrane translocase subunit TIM14-2 (TIM14-2).